We begin with the raw amino-acid sequence, 165 residues long: 6,7-dimethyl-8-ribityllumazine synthase (165 aa).

5-amino-6-(D-ribitylamino)uracil is bound by residues Trp26, Ser57 to Glu59, and Val79 to Val81. Ala84–Thr85 is a (2S)-2-hydroxy-3-oxobutyl phosphate binding site. His87 (proton donor) is an active-site residue. His112 contacts 5-amino-6-(D-ribitylamino)uracil. Arg126 provides a ligand contact to (2S)-2-hydroxy-3-oxobutyl phosphate.

Belongs to the DMRL synthase family.

The catalysed reaction is (2S)-2-hydroxy-3-oxobutyl phosphate + 5-amino-6-(D-ribitylamino)uracil = 6,7-dimethyl-8-(1-D-ribityl)lumazine + phosphate + 2 H2O + H(+). It functions in the pathway cofactor biosynthesis; riboflavin biosynthesis; riboflavin from 2-hydroxy-3-oxobutyl phosphate and 5-amino-6-(D-ribitylamino)uracil: step 1/2. In terms of biological role, catalyzes the formation of 6,7-dimethyl-8-ribityllumazine by condensation of 5-amino-6-(D-ribitylamino)uracil with 3,4-dihydroxy-2-butanone 4-phosphate. This is the penultimate step in the biosynthesis of riboflavin. This Salinispora arenicola (strain CNS-205) protein is 6,7-dimethyl-8-ribityllumazine synthase.